A 314-amino-acid chain; its full sequence is PDZ domain-containing protein GIPC2 (314 aa).

Residues 1–12 (MPLGLRGKKKAA) are compositionally biased toward basic residues. The tract at residues 1–36 (MPLGLRGKKKAAKSKETARLVEGERSGGSQGVPGPP) is disordered. Over residues 13-25 (KSKETARLVEGER) the composition is skewed to basic and acidic residues. A PDZ domain is found at 117–197 (EVNVYKSEDS…EELFTLQLIE (81 aa)).

It belongs to the GIPC family. In terms of assembly, probably interacts with SEMA5A.

Its subcellular location is the cytoplasm. The polypeptide is PDZ domain-containing protein GIPC2 (Gipc2) (Rattus norvegicus (Rat)).